A 607-amino-acid chain; its full sequence is LRR receptor kinase SERK2 (607 aa).

Positions 1-21 are cleaved as a signal peptide; that stretch reads MRELRVAVLIIAVSLPSFSAS. The Extracellular segment spans residues 22–219; sequence DRQGDALYDM…QSGSHSSKIG (198 aa). N-linked (GlcNAc...) asparagine glycosylation is found at asparagine 36 and asparagine 110. LRR repeat units follow at residues 87–110, 111–135, 136–159, and 160–183; these read LKYLTVLSLAGNRISGGIPEQFGN, LSSLTSLDLEDNLLVGEIPASLGQL, SKLQLLILSDNNFNGSIPDSLAKI, and SSLTDIRLAYNNLSGQIPGPLFQV. N-linked (GlcNAc...) asparagine glycans are attached at residues asparagine 149, asparagine 171, asparagine 187, and asparagine 206. The chain crosses the membrane as a helical span at residues 220-240; sequence IVLGTVGGVIGLLIVAALFLF. Over 241–607 the chain is Cytoplasmic; the sequence is CKGRRKSHLR…QEAIELSGGR (367 aa). A Protein kinase domain is found at 284–563; sequence FSERNVLGQG…VVRMLEGEGL (280 aa). ATP contacts are provided by residues 290 to 298 and lysine 312; that span reads LGQGGFGKV. Aspartate 411 serves as the catalytic Proton acceptor.

Belongs to the protein kinase superfamily. Ser/Thr protein kinase family.

It localises to the cell membrane. It catalyses the reaction L-seryl-[protein] + ATP = O-phospho-L-seryl-[protein] + ADP + H(+). The catalysed reaction is L-threonyl-[protein] + ATP = O-phospho-L-threonyl-[protein] + ADP + H(+). Its function is as follows. May be involved in the regulation of plant growth through the brassinosteroid (BR) signaling pathway. This is LRR receptor kinase SERK2 from Oryza sativa subsp. japonica (Rice).